The sequence spans 284 residues: NAD kinase (284 aa).

Aspartate 61 (proton acceptor) is an active-site residue. NAD(+) contacts are provided by residues 61-62 (DG), arginine 66, 136-137 (ND), arginine 147, lysine 164, aspartate 166, and leucine 201.

It belongs to the NAD kinase family. A divalent metal cation serves as cofactor.

The protein localises to the cytoplasm. It carries out the reaction NAD(+) + ATP = ADP + NADP(+) + H(+). Involved in the regulation of the intracellular balance of NAD and NADP, and is a key enzyme in the biosynthesis of NADP. Catalyzes specifically the phosphorylation on 2'-hydroxyl of the adenosine moiety of NAD to yield NADP. The protein is NAD kinase of Dehalococcoides mccartyi (strain ATCC BAA-2100 / JCM 16839 / KCTC 5957 / BAV1).